The chain runs to 521 residues: Caspase-10 (521 aa).

The propeptide occupies 1 to 219; that stretch reads MKSQGQHWYS…GEEELVSQTD (219 aa). 2 DED domains span residues 19 to 97 and 114 to 187; these read SFRE…HLNC and LFRN…NIEK. Polar residues-rich tracts occupy residues 231–248 and 259–268; these read SWQN…TNGA and ASANTLNSET. Positions 231-269 are disordered; sequence SWQNKHAGSNGNRATNGAPSLVSRGMQGASANTLNSETS. Residues H358 and C401 contribute to the active site.

This sequence belongs to the peptidase C14A family. Heterotetramer that consists of two anti-parallel arranged heterodimers, each one formed by a 23/17 kDa (p23/17) (depending on the splicing events) and a 12 kDa (p12) subunit. Self-associates. Interacts with FADD and CASP8. Found in a Fas signaling complex consisting of FAS, FADD, CASP8 and CASP10. Interacts with RFFL and RNF34; negatively regulate CASP10 through proteasomal degradation. Interacts with RIOK3. Post-translationally, cleavage by granzyme B and autocatalytic activity generate the two active subunits. In terms of tissue distribution, detectable in most tissues. Lowest expression is seen in brain, kidney, prostate, testis and colon.

It catalyses the reaction Strict requirement for Asp at position P1 and has a preferred cleavage sequence of Leu-Gln-Thr-Asp-|-Gly.. Functionally, involved in the activation cascade of caspases responsible for apoptosis execution. Recruited to both Fas- and TNFR-1 receptors in a FADD dependent manner. May participate in the granzyme B apoptotic pathways. Cleaves and activates effector caspases CASP3, CASP4, CASP6, CASP7, CASP8 and CASP9. Hydrolyzes the small- molecule substrates, Tyr-Val-Ala-Asp-|-AMC and Asp-Glu-Val-Asp-|-AMC. In terms of biological role, isoform 7 can enhance NF-kappaB activity but promotes only slight apoptosis. Isoform C is proteolytically inactive. In Homo sapiens (Human), this protein is Caspase-10 (CASP10).